A 250-amino-acid chain; its full sequence is Carboxymethylproline synthase (250 aa).

Ala60 to Phe64 is a malonyl-CoA binding site.

It belongs to the enoyl-CoA hydratase/isomerase family. In terms of assembly, homotrimer.

The enzyme catalyses (S)-1-pyrroline-5-carboxylate + malonyl-CoA + H2O + H(+) = (2S,5S)-5-carboxymethylproline + CO2 + CoA. It participates in antibiotic biosynthesis; carbapenem biosynthesis. Functionally, catalyzes the formation of (2S,5S)-carboxymethylproline (t-CMP) from malonyl-CoA and (S)-1-pyrroline-5-carboxylate, the first step in the biosynthesis of (5R)-carbapen-2-em-3-carboxylate, a beta-lactam antibiotic of the carbapenem class. Also catalyzes the independent decarboxylation of malonyl-CoA and methylmalonyl-CoA and the hydrolysis of CoA esters such as acetyl-CoA and propionyl-CoA. Catalyzes the reaction with a C2 epimeric mixture of methylmalonyl-CoA to give a 55:45 mixture of (6R)- and (6S)-epimers of 6-methyl-t-CMP, under standard incubation conditions. This is Carboxymethylproline synthase from Pectobacterium carotovorum subsp. carotovorum (Erwinia carotovora subsp. carotovora).